A 346-amino-acid polypeptide reads, in one-letter code: Glycerol-1-phosphate dehydrogenase [NAD(P)+] (346 aa).

Residues 93-97 (GTIID) and 115-118 (TTAS) contribute to the NAD(+) site. Residue Asp-120 coordinates substrate. Residue Ser-124 participates in NAD(+) binding. Asp-167 provides a ligand contact to substrate. Asp-167 and His-247 together coordinate Zn(2+). His-251 is a binding site for substrate. Residue His-263 participates in Zn(2+) binding.

It belongs to the glycerol-1-phosphate dehydrogenase family. The cofactor is Zn(2+).

The protein localises to the cytoplasm. The enzyme catalyses sn-glycerol 1-phosphate + NAD(+) = dihydroxyacetone phosphate + NADH + H(+). The catalysed reaction is sn-glycerol 1-phosphate + NADP(+) = dihydroxyacetone phosphate + NADPH + H(+). The protein operates within membrane lipid metabolism; glycerophospholipid metabolism. Catalyzes the NAD(P)H-dependent reduction of dihydroxyacetonephosphate (DHAP or glycerone phosphate) to glycerol 1-phosphate (G1P). The G1P thus generated is used as the glycerophosphate backbone of phospholipids in the cellular membranes of Archaea. In Pyrococcus furiosus (strain ATCC 43587 / DSM 3638 / JCM 8422 / Vc1), this protein is Glycerol-1-phosphate dehydrogenase [NAD(P)+].